Reading from the N-terminus, the 215-residue chain is Pyrrolidone-carboxylate peptidase (215 aa).

Residues Glu80, Cys143, and His167 contribute to the active site.

This sequence belongs to the peptidase C15 family. In terms of assembly, homotetramer.

The protein resides in the cytoplasm. It catalyses the reaction Release of an N-terminal pyroglutamyl group from a polypeptide, the second amino acid generally not being Pro.. Removes 5-oxoproline from various penultimate amino acid residues except L-proline. In Bacillus cereus (strain B4264), this protein is Pyrrolidone-carboxylate peptidase.